A 201-amino-acid chain; its full sequence is Dephospho-CoA kinase (201 aa).

Residues 4–201 (SVGLTGNIAS…KYLREAKIKQ (198 aa)) enclose the DPCK domain. 12–17 (ASGKST) provides a ligand contact to ATP.

Belongs to the CoaE family.

The protein localises to the cytoplasm. The enzyme catalyses 3'-dephospho-CoA + ATP = ADP + CoA + H(+). It participates in cofactor biosynthesis; coenzyme A biosynthesis; CoA from (R)-pantothenate: step 5/5. Functionally, catalyzes the phosphorylation of the 3'-hydroxyl group of dephosphocoenzyme A to form coenzyme A. This is Dephospho-CoA kinase from Legionella pneumophila subsp. pneumophila (strain Philadelphia 1 / ATCC 33152 / DSM 7513).